Here is a 224-residue protein sequence, read N- to C-terminus: Urease accessory protein UreF (224 aa).

This sequence belongs to the UreF family. As to quaternary structure, ureD, UreF and UreG form a complex that acts as a GTP-hydrolysis-dependent molecular chaperone, activating the urease apoprotein by helping to assemble the nickel containing metallocenter of UreC. The UreE protein probably delivers the nickel.

It localises to the cytoplasm. Functionally, required for maturation of urease via the functional incorporation of the urease nickel metallocenter. This Pseudomonas putida (strain ATCC 47054 / DSM 6125 / CFBP 8728 / NCIMB 11950 / KT2440) protein is Urease accessory protein UreF.